The following is a 134-amino-acid chain: Large ribosomal subunit protein uL16c (134 aa).

It belongs to the universal ribosomal protein uL16 family. Part of the 50S ribosomal subunit.

The protein localises to the plastid. The protein resides in the chloroplast. The protein is Large ribosomal subunit protein uL16c of Oltmannsiellopsis viridis (Marine flagellate).